The primary structure comprises 182 residues: MPLLNSLATPYAEALLQVTEARGESQTVADQCKQLLEIWDSSADFRNAMVSPVLEPDAKKMALQALVGEQVTPSMLNLLKVLADRQRLLAFDAVMLRYLELYREQQGITLAEVRSAQTLTEDQQAALSKKVQAMAGTNMVDIDLSVDPSLIGGFVVSLGSQVIDASLAGQVRRLGLALAKAS.

It belongs to the ATPase delta chain family. F-type ATPases have 2 components, F(1) - the catalytic core - and F(0) - the membrane proton channel. F(1) has five subunits: alpha(3), beta(3), gamma(1), delta(1), epsilon(1). CF(0) has four main subunits: a(1), b(1), b'(1) and c(10-14). The alpha and beta chains form an alternating ring which encloses part of the gamma chain. F(1) is attached to F(0) by a central stalk formed by the gamma and epsilon chains, while a peripheral stalk is formed by the delta, b and b' chains.

The protein localises to the cellular thylakoid membrane. Functionally, f(1)F(0) ATP synthase produces ATP from ADP in the presence of a proton or sodium gradient. F-type ATPases consist of two structural domains, F(1) containing the extramembraneous catalytic core and F(0) containing the membrane proton channel, linked together by a central stalk and a peripheral stalk. During catalysis, ATP synthesis in the catalytic domain of F(1) is coupled via a rotary mechanism of the central stalk subunits to proton translocation. This protein is part of the stalk that links CF(0) to CF(1). It either transmits conformational changes from CF(0) to CF(1) or is implicated in proton conduction. In Parasynechococcus marenigrum (strain WH8102), this protein is ATP synthase subunit delta.